The following is a 201-amino-acid chain: uncharacterized protein (201 aa).

Residues 11 to 31 traverse the membrane as a helical segment; the sequence is IIILTIMILTIIIFTRTINGL.

The protein resides in the membrane. This is an uncharacterized protein from Acanthamoeba polyphaga mimivirus (APMV).